A 272-amino-acid polypeptide reads, in one-letter code: NH(3)-dependent NAD(+) synthetase (272 aa).

Position 33 (tyrosine 33) interacts with deamido-NAD(+). ATP is bound by residues 45-52 (GISGGQDS), arginine 79, and glutamine 85. Mg(2+) is bound at residue aspartate 51. A deamido-NAD(+)-binding site is contributed by arginine 138. Threonine 158 contacts ATP. Glutamate 163 is a Mg(2+) binding site. Residues lysine 171 and aspartate 178 each coordinate deamido-NAD(+). The ATP site is built by lysine 187 and threonine 209. Residues glutamate 224 and 258 to 259 (HK) contribute to the deamido-NAD(+) site.

It belongs to the NAD synthetase family. As to quaternary structure, homodimer. In terms of processing, phosphorylated during sporulation.

The catalysed reaction is deamido-NAD(+) + NH4(+) + ATP = AMP + diphosphate + NAD(+) + H(+). Its pathway is cofactor biosynthesis; NAD(+) biosynthesis; NAD(+) from deamido-NAD(+) (ammonia route): step 1/1. Catalyzes the ATP-dependent amidation of deamido-NAD to form NAD. Uses ammonia as a nitrogen source. The chain is NH(3)-dependent NAD(+) synthetase from Bacillus subtilis (strain 168).